We begin with the raw amino-acid sequence, 473 residues long: Lactate utilization protein B (473 aa).

4Fe-4S ferredoxin-type domains are found at residues 302–332 (GSEFRQVLQCIRCAACVNVCPVYRHVGGHSY) and 351–380 (YDDYKELPYASSLCGACTEACPVKIPLHDL). C311, C314, C317, C321, C364, C367, and C371 together coordinate [4Fe-4S] cluster.

Belongs to the LutB/YkgF family.

Is involved in L-lactate degradation and allows cells to grow with lactate as the sole carbon source. Has probably a role as an electron transporter during oxidation of L-lactate. The sequence is that of Lactate utilization protein B from Bacillus anthracis (strain A0248).